We begin with the raw amino-acid sequence, 247 residues long: Protein Thf1 (247 aa).

Residues 198–224 (IAQVRQAMDDILEAQKKRREADQAKKE) are a coiled coil. A disordered region spans residues 209–247 (LEAQKKRREADQAKKEGSDDTPTTEASTPDSEPTSEVSS). Positions 210-226 (EAQKKRREADQAKKEGS) are enriched in basic and acidic residues. Polar residues predominate over residues 228–247 (DTPTTEASTPDSEPTSEVSS).

The protein belongs to the THF1 family.

In terms of biological role, may be involved in photosynthetic membrane biogenesis. The polypeptide is Protein Thf1 (Acaryochloris marina (strain MBIC 11017)).